Consider the following 688-residue polypeptide: MMAENNLKMLKIQQCVVANKLPRNRPYVCNICFKHFETPSKLARHYLIHTGQKPFECDVCHKTFRQLVHLERHQLTHSLPFKCSICQRHFKNLKTFVKHQQLHNETYQNNVKQVRRLLEAKQEKSMYGVYNTFTTEERWALHPCSKSDPMYSMKRRKNIHACTICGKMFPSQSKLDRHVLIHTGQRPFKCVLCTKSFRQSTHLKIHQLTHSEERPFQCCFCQKGFKIQSKLLKHKQIHTRNKAFRALLLKKRRTESCPMPNKLNANQGGFENGEIGESEENNPLDVHSIYIVPFQCPKCEKCFESEQILNEHSCFPARGGKIPSRFKRSYNYKTIVKKILAKLKRARTKKLDNFQSEKKVFKKSFLRNYDLISGEQSSEQTQRTFVSSLGKHGTYKTTGNRKKKTLTLPFSWQNMGKNLKGILTTENILSIDNSVNKKDLSICGSSGEEFFNNCEVLQCGFSVPRENIRTRHKICPCDKCEKVFPSISKLKRHYLIHTGQRPFGCNICGKSFRQSAHLKRHEQTHNEKSPYASLCQVEFGNFNNLSNHPDNNVNYNASQQCQAPGVQKYEVSESDQMSGVKAESQDFIPGSTGCLPNVLLESEQSNPFCSYSEHQEKNDVFLYRCSVCAKSFRSPSKLERHYLIHAGQKPFECSVCGKTFRQAPHWKRHQLTHFKERPQGKVVCLRFG.

Residue Lys-11 forms a Glycyl lysine isopeptide (Lys-Gly) (interchain with G-Cter in SUMO2) linkage. 3 C2H2-type zinc fingers span residues 27–49 (YVCN…YLIH), 55–77 (FECD…QLTH), and 81–103 (FKCS…QQLH). Residues Lys-112, Lys-121, and Lys-146 each participate in a glycyl lysine isopeptide (Lys-Gly) (interchain with G-Cter in SUMO2) cross-link. C2H2-type zinc fingers lie at residues 160–182 (HACT…VLIH), 188–210 (FKCV…QLTH), and 216–238 (FQCC…KQIH). Lys-262 participates in a covalent cross-link: Glycyl lysine isopeptide (Lys-Gly) (interchain with G-Cter in SUMO2). The C2H2-type 7; degenerate zinc-finger motif lies at 294 to 318 (FQCPKCEKCFESEQILNEHSCFPAR). Residues Lys-420 and Lys-437 each participate in a glycyl lysine isopeptide (Lys-Gly) (interchain with G-Cter in SUMO2) cross-link. 4 consecutive C2H2-type zinc fingers follow at residues 475 to 497 (CPCD…YLIH), 503 to 525 (FGCN…EQTH), 623 to 645 (YRCS…YLIH), and 651 to 673 (FECS…QLTH). Residue Lys-681 forms a Glycyl lysine isopeptide (Lys-Gly) (interchain with G-Cter in SUMO2) linkage.

It belongs to the krueppel C2H2-type zinc-finger protein family.

It localises to the nucleus. Functionally, may be involved in transcriptional regulation. The chain is Zinc finger protein 770 (ZNF770) from Pongo abelii (Sumatran orangutan).